The sequence spans 990 residues: Bifunctional glutamine synthetase adenylyltransferase/adenylyl-removing enzyme (990 aa).

The segment at 1-474 (MIFSAITADL…HYAKLFEGDP (474 aa)) is adenylyl removase. Positions 478-990 (AKLPPVDYGA…FSRLIGGEDA (513 aa)) are adenylyl transferase.

Belongs to the GlnE family. Mg(2+) is required as a cofactor.

The enzyme catalyses [glutamine synthetase]-O(4)-(5'-adenylyl)-L-tyrosine + phosphate = [glutamine synthetase]-L-tyrosine + ADP. The catalysed reaction is [glutamine synthetase]-L-tyrosine + ATP = [glutamine synthetase]-O(4)-(5'-adenylyl)-L-tyrosine + diphosphate. In terms of biological role, involved in the regulation of glutamine synthetase GlnA, a key enzyme in the process to assimilate ammonia. When cellular nitrogen levels are high, the C-terminal adenylyl transferase (AT) inactivates GlnA by covalent transfer of an adenylyl group from ATP to specific tyrosine residue of GlnA, thus reducing its activity. Conversely, when nitrogen levels are low, the N-terminal adenylyl removase (AR) activates GlnA by removing the adenylyl group by phosphorolysis, increasing its activity. The regulatory region of GlnE binds the signal transduction protein PII (GlnB) which indicates the nitrogen status of the cell. This is Bifunctional glutamine synthetase adenylyltransferase/adenylyl-removing enzyme from Rhodopseudomonas palustris (strain ATCC BAA-98 / CGA009).